We begin with the raw amino-acid sequence, 257 residues long: Zinc transporter ZupT (257 aa).

3 consecutive transmembrane segments (helical) span residues 5 to 25, 32 to 52, and 61 to 81; these read LILT…GVLG, LLAF…LMEM, and GMSP…YFGL. 2 residues coordinate Fe(2+): Asn120 and Glu123. Residues Glu123 and His148 each contribute to the Zn(2+) site. The next 4 helical transmembrane spans lie at 137–157, 171–191, 195–215, and 236–256; these read LGFG…LAVA, ILWA…AWLI, MISP…MVAL, and GVLC…TAGI. Residues Asn149, Glu152, and Glu181 each contribute to the Fe(2+) site. Zn(2+) is bound at residue Glu152.

The protein belongs to the ZIP transporter (TC 2.A.5) family. ZupT subfamily.

The protein localises to the cell inner membrane. It catalyses the reaction Zn(2+)(in) = Zn(2+)(out). In terms of biological role, mediates zinc uptake. May also transport other divalent cations. The protein is Zinc transporter ZupT of Escherichia coli O7:K1 (strain IAI39 / ExPEC).